Consider the following 835-residue polypeptide: Microcephalin (835 aa).

The BRCT 1 domain maps to 1–93 (MAAPILKDVV…AHIDESLFPA (93 aa)). A phosphoserine mark is found at Ser-279, Ser-287, Ser-296, and Ser-333. Disordered regions lie at residues 313–381 (PDQK…RRSI) and 419–443 (DNLK…AQLS). A Phosphothreonine modification is found at Thr-335. Basic residues predominate over residues 343–361 (LLIHSRPRSSSVKRKRVSH). A compositionally biased stretch (polar residues) spans 434–443 (QLPSSPAQLS). Position 548 is a phosphoserine (Ser-548). A disordered region spans residues 555–584 (AVGLKSTQNKGTTSKISNSSEGEAQSEHEP). Residues 559–577 (KSTQNKGTTSKISNSSEGE) show a composition bias toward polar residues. BRCT domains follow at residues 640–730 (SGRG…PFEL) and 751–833 (YRGT…NYLL).

In terms of assembly, interacts with CDC27 and maybe other components of the APC/C complex. Interacts with histone variant H2AX under DNA damage conditions. As to expression, expressed in fetal brain, liver and kidney.

It is found in the cytoplasm. The protein resides in the cytoskeleton. It localises to the microtubule organizing center. Its subcellular location is the centrosome. Implicated in chromosome condensation and DNA damage induced cellular responses. May play a role in neurogenesis and regulation of the size of the cerebral cortex. The protein is Microcephalin of Homo sapiens (Human).